Consider the following 465-residue polypeptide: MDFLPLFHSLQGRLALVVGGGEVALRKARLLADAGARLRVVAPQIHIELRHLVEQGGGELLERDYQDGDQPGCALIIAATDDEPLNAEVSRAANARGIPVNVVDAPALCSVIFPAIVDRSPLVVAVSSGGDAPVLARLIRAKLETWIPSTYGQLAGLASRFRHRVKELLPDLQQRRVFWENLFQGEIAERVLAGRPAEAERLLEERLAGGLAHIATGEVYLVGAGPGDPDLLTFRALRLMQQADVVLYDRLVAPSILELCRRDAERLYVGKRRAEHAVPQDRINRLLVELASQGKRVLRLKGGDPFIFGRGGEEIDELAARGIPFQVVPGITAASGCAAYAGIPLTHRDHAQSVRFVTGHLKDGTTDLPWQDLVAPGQTLVFYMGLVGLPVICEQLVAHGRSAQTPAALIQQGTTAQQRVFTGTLENLPQLVAEHEVHAPTLVIVGEVVQLRDKLAWFEGAREDA.

Residues 1 to 203 form a precorrin-2 dehydrogenase /sirohydrochlorin ferrochelatase region; it reads MDFLPLFHSL…GRPAEAERLL (203 aa). Residues 22–23 and 43–44 each bind NAD(+); these read EV and PQ. S128 bears the Phosphoserine mark. The interval 217 to 465 is uroporphyrinogen-III C-methyltransferase; sequence GEVYLVGAGP…AWFEGAREDA (249 aa). Position 226 (P226) interacts with S-adenosyl-L-methionine. D249 (proton acceptor) is an active-site residue. The Proton donor role is filled by K271. Residues 302–304, I307, 332–333, M384, and G413 each bind S-adenosyl-L-methionine; these read GGD and TA.

It in the N-terminal section; belongs to the precorrin-2 dehydrogenase / sirohydrochlorin ferrochelatase family. The protein in the C-terminal section; belongs to the precorrin methyltransferase family.

It carries out the reaction uroporphyrinogen III + 2 S-adenosyl-L-methionine = precorrin-2 + 2 S-adenosyl-L-homocysteine + H(+). It catalyses the reaction precorrin-2 + NAD(+) = sirohydrochlorin + NADH + 2 H(+). The enzyme catalyses siroheme + 2 H(+) = sirohydrochlorin + Fe(2+). Its pathway is cofactor biosynthesis; adenosylcobalamin biosynthesis; precorrin-2 from uroporphyrinogen III: step 1/1. The protein operates within cofactor biosynthesis; adenosylcobalamin biosynthesis; sirohydrochlorin from precorrin-2: step 1/1. It functions in the pathway porphyrin-containing compound metabolism; siroheme biosynthesis; precorrin-2 from uroporphyrinogen III: step 1/1. It participates in porphyrin-containing compound metabolism; siroheme biosynthesis; siroheme from sirohydrochlorin: step 1/1. Its pathway is porphyrin-containing compound metabolism; siroheme biosynthesis; sirohydrochlorin from precorrin-2: step 1/1. Its function is as follows. Multifunctional enzyme that catalyzes the SAM-dependent methylations of uroporphyrinogen III at position C-2 and C-7 to form precorrin-2 via precorrin-1. Then it catalyzes the NAD-dependent ring dehydrogenation of precorrin-2 to yield sirohydrochlorin. Finally, it catalyzes the ferrochelation of sirohydrochlorin to yield siroheme. The protein is Siroheme synthase of Pseudomonas aeruginosa (strain UCBPP-PA14).